A 722-amino-acid chain; its full sequence is DUF724 domain-containing protein 7 (722 aa).

The tract at residues 424–449 (KTTPKKKLQAMKNQKSSTNDSVGEKV) is disordered. Positions 434-444 (MKNQKSSTNDS) are enriched in polar residues. The DUF724 domain occupies 540–720 (VLPFVKKSQL…HEFQAILAAP (181 aa)). A coiled-coil region spans residues 645–712 (CALEELKAVE…DQEVQNVDHE (68 aa)).

Homodimer. Interacts wtih ABAP1, ARIA and LHP1. Interacts with the non-modified histones H1, H2B, H3 and H4. Expressed in roots, leaves, stems and flowers.

It localises to the nucleus. May act as a link between DNA replication, transcription and chromatin remodeling during flower development. May participate in the repression of LHP1-targeted genes during flower development by direct interaction with LHP1. May be involved in the polar growth of plant cells via transportation of RNAs. The sequence is that of DUF724 domain-containing protein 7 from Arabidopsis thaliana (Mouse-ear cress).